Here is a 509-residue protein sequence, read N- to C-terminus: uncharacterized protein (509 aa).

Disordered regions lie at residues 112-131 (KSKQ…SENE), 152-325 (NKNT…NNDS), 365-457 (NNIN…PNQG), and 488-509 (AQQP…VQQQ). Composition is skewed to low complexity over residues 116 to 127 (NNNGFNGHKGNF) and 153 to 184 (KNTI…SNTT). The span at 189–217 (YSDDDYQNEQNEFEEEDYDSNDDENDSHD) shows a compositional bias: acidic residues. The segment covering 228–242 (KTTNQLKRKVSSSFT) has biased composition (polar residues). Composition is skewed to low complexity over residues 243 to 325 (NNNY…NNDS) and 365 to 397 (NNIN…TNND). Over residues 398-422 (LKSSNHSNYDFNYNTNERLSHSPIQ) the composition is skewed to polar residues. Positions 423–442 (THSSSNNSTPSNQSPTFPSN) are enriched in low complexity. Composition is skewed to polar residues over residues 443 to 457 (YISQ…PNQG) and 496 to 509 (NNNV…VQQQ).

This is an uncharacterized protein from Dictyostelium discoideum (Social amoeba).